The primary structure comprises 937 residues: Diacylglycerol kinase theta (937 aa).

The segment at 1–48 (MATAAESGARTWPGSGSPRLGSPAGSPVLGISGRARPGSGPERTGRAI) is disordered. A phosphoserine mark is found at Ser22 and Ser26. 3 consecutive Phorbol-ester/DAG-type zinc fingers follow at residues 54 to 102 (GHSF…KTPC), 115 to 162 (AHCF…CSDC), and 177 to 228 (HHHW…TPEC). The disordered stretch occupies residues 359–378 (GKAGTTEEETSKDSGPGDSV). In terms of domain architecture, Ras-associating spans 390–489 (TQEILKIYPD…TRFYVAEARA (100 aa)). 2 short sequence motifs (LXXLL motif) span residues 550 to 554 (LYMLA) and 569 to 573 (LPDVL). One can recognise a DAGKc domain in the interval 579-716 (PDCCPLLVFV…MDRWTILLDA (138 aa)). Residues 911–937 (AKQKPRKAGAIRDTRVDTLPAPEGNPL) form a disordered region.

It belongs to the eukaryotic diacylglycerol kinase family. In terms of assembly, interacts with RHOA (constitutively activated, GTP-bound); the interaction inhibits DGKQ. Interacts with PRKCE. Interacts with PRKCH. Interacts with PLCB1. Interacts with NR5A1; the interaction requires both LXXLL motifs in DGKQ and is required for full phosphatidic acid-mediated activation of NR5A1. Post-translationally, phosphorylated by PRKCE and PRKCH in vitro. Widely expressed with higher expression in the brain and, to a lesser extent, in the small intestine, duodenum, and liver. In brain, expressed in gray matter. Expression is most intense in the cerebellar cortex and hippocampus, while moderate expression is seen in the olfactory bulb neuronal layers and brain stem nuclei. In the cerebellar cortex, equally expressed in both the Purkinje cell somata and the granule cells.

Its subcellular location is the cytoplasm. It localises to the cytosol. The protein resides in the cell membrane. It is found in the synapse. The protein localises to the cytoskeleton. Its subcellular location is the nucleus. It localises to the nucleus speckle. The protein resides in the nucleus matrix. The catalysed reaction is a 1,2-diacyl-sn-glycerol + ATP = a 1,2-diacyl-sn-glycero-3-phosphate + ADP + H(+). It carries out the reaction a 1-O-alkyl-sn-glycerol + ATP = a 1-O-alkyl-sn-glycero-3-phosphate + ADP + H(+). The enzyme catalyses 1-O-alkyl-2-acyl-sn-glycerol + ATP = 1-O-alkyl-2-acyl-sn-glycero-3-phosphate + ADP + H(+). It catalyses the reaction 1,2-di-(9Z-octadecenoyl)-sn-glycerol + ATP = 1,2-di-(9Z-octadecenoyl)-sn-glycero-3-phosphate + ADP + H(+). The catalysed reaction is 1-O-hexadecyl-sn-glycerol + ATP = 1-O-hexadecyl-sn-glycero-3-phosphate + ADP + H(+). It carries out the reaction 1-O-hexadecyl-2-acetyl-sn-glycerol + ATP = 1-O-hexadecyl-2-acetyl-sn-glycero-3-phosphate + ADP + H(+). The enzyme catalyses 1-octadecanoyl-2-(5Z,8Z,11Z,14Z-eicosatetraenoyl)-sn-glycerol + ATP = 1-octadecanoyl-2-(5Z,8Z,11Z,14Z-eicosatetraenoyl)-sn-glycero-3-phosphate + ADP + H(+). It functions in the pathway lipid metabolism; glycerolipid metabolism. With respect to regulation, activated by phosphatidylserine. In terms of biological role, diacylglycerol kinase that converts diacylglycerol/DAG into phosphatidic acid/phosphatidate/PA and regulates the respective levels of these two bioactive lipids. Thereby, acts as a central switch between the signaling pathways activated by these second messengers with different cellular targets and opposite effects in numerous biological processes. Within the adrenocorticotropic hormone signaling pathway, produces phosphatidic acid which in turn activates NR5A1 and subsequent steroidogenic gene transcription. Also functions downstream of the nerve growth factor signaling pathway being specifically activated in the nucleus by the growth factor. Through its diacylglycerol activity also regulates synaptic vesicle endocytosis. In Rattus norvegicus (Rat), this protein is Diacylglycerol kinase theta.